A 448-amino-acid chain; its full sequence is Carbamoyl phosphate synthase arginine-specific small chain (448 aa).

Residues 1-27 (MFKNIARLASMARSAPRTTASFQTRFM) constitute a mitochondrion transit peptide. Positions 224–415 (HIAVIDCGVK…LGQVHQYRAA (192 aa)) constitute a Glutamine amidotransferase type-1 domain. Cys304 (nucleophile) is an active-site residue. Residues His388 and Glu390 contribute to the active site.

It belongs to the CarA family. In terms of assembly, heterodimer composed of 2 chains; the small (or glutamine) chain promotes the hydrolysis of glutamine to ammonia, which is used by the large (or ammonia) chain to synthesize carbamoyl phosphate.

It localises to the mitochondrion matrix. It catalyses the reaction hydrogencarbonate + L-glutamine + 2 ATP + H2O = carbamoyl phosphate + L-glutamate + 2 ADP + phosphate + 2 H(+). It carries out the reaction L-glutamine + H2O = L-glutamate + NH4(+). Its pathway is amino-acid biosynthesis; L-arginine biosynthesis; carbamoyl phosphate from bicarbonate: step 1/1. Small subunit of the arginine-specific carbamoyl phosphate synthase (CPSase). CPSase catalyzes the formation of carbamoyl phosphate from the ammonia moiety of glutamine, carbonate, and phosphate donated by ATP, the first step of the arginine biosynthetic pathway. The small subunit (glutamine amidotransferase) binds and cleaves glutamine to supply the large subunit with the substrate ammonia. The chain is Carbamoyl phosphate synthase arginine-specific small chain (CPA1) from Yarrowia lipolytica (strain CLIB 122 / E 150) (Yeast).